Consider the following 359-residue polypeptide: Dihydroorotate dehydrogenase (quinone) (359 aa).

FMN-binding positions include 68 to 72 (AGFDK) and T92. A substrate-binding site is contributed by K72. 117–121 (NRMGF) is a substrate binding site. 2 residues coordinate FMN: N145 and N176. N176 is a substrate binding site. S179 (nucleophile) is an active-site residue. Substrate is bound at residue N181. Residues K212 and T240 each coordinate FMN. 241–242 (NT) contributes to the substrate binding site. FMN contacts are provided by residues G266, G295, and 316–317 (YT).

Belongs to the dihydroorotate dehydrogenase family. Type 2 subfamily. Monomer. The cofactor is FMN.

It is found in the cell membrane. It catalyses the reaction (S)-dihydroorotate + a quinone = orotate + a quinol. It participates in pyrimidine metabolism; UMP biosynthesis via de novo pathway; orotate from (S)-dihydroorotate (quinone route): step 1/1. Functionally, catalyzes the conversion of dihydroorotate to orotate with quinone as electron acceptor. The chain is Dihydroorotate dehydrogenase (quinone) from Corynebacterium striatum.